The sequence spans 216 residues: NKG2-D type II integral membrane protein (216 aa).

At 1-51 (MGWIRGRRPRHNLEMSEFHNYKLGLAKSDFSTRCQKQRCPVIKSKCRENAS) the chain is on the cytoplasmic side. A helical; Signal-anchor for type II membrane protein membrane pass occupies residues 52–72 (PLFFCCFIAVAMGIRFIIMVT). Over 73-216 (IWSAVFLNSL…NTYICMQRTV (144 aa)) the chain is Extracellular. Intrachain disulfides connect Cys-96–Cys-105 and Cys-99–Cys-110. The region spanning 98–213 (PCPKNWICYK…SIPNTYICMQ (116 aa)) is the C-type lectin domain. N-linked (GlcNAc...) asparagine glycans are attached at residues Asn-115, Asn-131, Asn-163, and Asn-202. Disulfide bonds link Cys-127/Cys-211 and Cys-189/Cys-203.

In terms of assembly, homodimer; disulfide-linked. Heterohexamer composed of two subunits of KLRK1 and four subunits of HCST/DAP10. Interacts (via transmembrane domain) with HCST/DAP10 (via transmembrane domain); the interaction is required for KLRK1 NK cell surface and induces NK cell-mediated cytotoxicity. Can form disulfide-bonded heterodimer with CD94. Interacts with CEACAM1; recruits PTPN6 that dephosphorylates VAV1. Natural killer cells.

It is found in the cell membrane. Functionally, functions as an activating and costimulatory receptor involved in immunosurveillance upon binding to various cellular stress-inducible ligands displayed at the surface of autologous tumor cells and virus-infected cells. Provides both stimulatory and costimulatory innate immune responses on activated killer (NK) cells, leading to cytotoxic activity. Acts as a costimulatory receptor for T-cell receptor (TCR) in CD8(+) T-cell-mediated adaptive immune responses by amplifying T-cell activation. Stimulates perforin-mediated elimination of ligand-expressing tumor cells. Signaling involves calcium influx, culminating in the expression of TNF-alpha. Participates in NK cell-mediated bone marrow graft rejection. May play a regulatory role in differentiation and survival of NK cells. Binds to ligands belonging to various subfamilies of MHC class I-related glycoproteins. The protein is NKG2-D type II integral membrane protein (KLRK1) of Macaca fascicularis (Crab-eating macaque).